Reading from the N-terminus, the 339-residue chain is tRNA-specific 2-thiouridylase MnmA (339 aa).

Residues 6–13 and Met32 each bind ATP; that span reads AMSGGVDS. The Nucleophile role is filled by Cys92. Residues Cys92 and Cys186 are joined by a disulfide bond. Gly116 serves as a coordination point for ATP. Residues 134–136 form an interaction with tRNA region; that stretch reads KDQ. Catalysis depends on Cys186, which acts as the Cysteine persulfide intermediate. The segment at 288–289 is interaction with tRNA; the sequence is RY.

Belongs to the MnmA/TRMU family.

The protein resides in the cytoplasm. The catalysed reaction is S-sulfanyl-L-cysteinyl-[protein] + uridine(34) in tRNA + AH2 + ATP = 2-thiouridine(34) in tRNA + L-cysteinyl-[protein] + A + AMP + diphosphate + H(+). In terms of biological role, catalyzes the 2-thiolation of uridine at the wobble position (U34) of tRNA, leading to the formation of s(2)U34. The sequence is that of tRNA-specific 2-thiouridylase MnmA from Campylobacter curvus (strain 525.92).